Here is a 24-residue protein sequence, read N- to C-terminus: uncharacterized protein (24 aa).

Residues 1–3 lie on the Cytoplasmic side of the membrane; the sequence is MKK. The chain crosses the membrane as a helical span at residues 4-24; sequence TTIIMMGVAIIVVLGTELGWW.

The protein resides in the cell inner membrane. This is an uncharacterized protein from Escherichia coli (strain K12).